Consider the following 277-residue polypeptide: Basic leucine zipper transcriptional factor ATF-like 2 (277 aa).

Disordered stretches follow at residues 15-50 (LGESQKQLKKKQKNRVAAQRSRQKHTSKADALHQQH), 126-146 (FQTPGSSPRAQHLSPGPCSHE), and 191-256 (SFSK…QKSS). The bZIP domain maps to 18–81 (SQKQLKKKQK…AGWGRTLHLH (64 aa)). Residues 20 to 42 (KQLKKKQKNRVAAQRSRQKHTSK) form a basic motif region. A compositionally biased stretch (basic and acidic residues) spans 41-50 (SKADALHQQH). The segment at 46–67 (LHQQHESLEKQNHALRKEIQAL) is leucine-zipper. Polar residues-rich tracts occupy residues 213 to 227 (RQEQPTSGRLASSDS) and 247 to 256 (GSSTHWQKSS).

Belongs to the bZIP family. Heterodimer; heterodimerizes with JUN family proteins.

It is found in the nucleus. In terms of biological role, AP-1 family transcription factor that controls the differentiation of lineage-specific cells in the immune system. Selectively suppresses CCN1 transcription and hence blocks the downstream cell proliferation signals produced by CCN1 and inhibits CCN1-induced anchorage-independent growth and invasion in several cancer types. Possibly acts by interfering with AP-1 binding to CCN1 promoter. Following infection, participates in the differentiation of CD8(+) thymic conventional dendritic cells in the immune system. Acts via the formation of a heterodimer with JUN family proteins that recognizes and binds DNA sequence 5'-TGA[CG]TCA-3' and regulates expression of target genes. In Mus musculus (Mouse), this protein is Basic leucine zipper transcriptional factor ATF-like 2 (Batf2).